A 183-amino-acid chain; its full sequence is Glutathione-regulated potassium-efflux system ancillary protein KefG (183 aa).

Belongs to the NAD(P)H dehydrogenase (quinone) family. KefG subfamily. As to quaternary structure, interacts with KefB.

It localises to the cell inner membrane. The enzyme catalyses a quinone + NADH + H(+) = a quinol + NAD(+). It catalyses the reaction a quinone + NADPH + H(+) = a quinol + NADP(+). In terms of biological role, regulatory subunit of a potassium efflux system that confers protection against electrophiles. Required for full activity of KefB. The polypeptide is Glutathione-regulated potassium-efflux system ancillary protein KefG (Salmonella gallinarum (strain 287/91 / NCTC 13346)).